We begin with the raw amino-acid sequence, 36 residues long: Photosystem I reaction center subunit VIII (36 aa).

Residues 9 to 29 (ILVPLVGLVFPAVTMASLFLY) form a helical membrane-spanning segment.

This sequence belongs to the PsaI family.

It localises to the plastid. The protein localises to the chloroplast thylakoid membrane. In terms of biological role, may help in the organization of the PsaL subunit. This Staurastrum punctulatum (Green alga) protein is Photosystem I reaction center subunit VIII.